A 343-amino-acid polypeptide reads, in one-letter code: GTPase Obg (343 aa).

Residues 1 to 157 (MKFIDEVSIS…IEVRLELKLI (157 aa)) enclose the Obg domain. The disordered stretch occupies residues 13-44 (SGRGGPGCVSFRRESMQARGGPDGGNGGKGGD). A compositionally biased stretch (gly residues) spans 33 to 43 (GPDGGNGGKGG). Positions 158–338 (ADVGIVGFPN…FVQELARQIL (181 aa)) constitute an OBG-type G domain. GTP-binding positions include 164–171 (GFPNAGKS), 189–193 (FTTLT), 211–214 (DIPG), 290–293 (NKID), and 319–321 (SAV). Residues Ser-171 and Thr-191 each coordinate Mg(2+).

This sequence belongs to the TRAFAC class OBG-HflX-like GTPase superfamily. OBG GTPase family. Monomer. Mg(2+) is required as a cofactor.

It localises to the cytoplasm. In terms of biological role, an essential GTPase which binds GTP, GDP and possibly (p)ppGpp with moderate affinity, with high nucleotide exchange rates and a fairly low GTP hydrolysis rate. Plays a role in control of the cell cycle, stress response, ribosome biogenesis and in those bacteria that undergo differentiation, in morphogenesis control. This Bdellovibrio bacteriovorus (strain ATCC 15356 / DSM 50701 / NCIMB 9529 / HD100) protein is GTPase Obg.